The chain runs to 213 residues: dITP/XTP pyrophosphatase (213 aa).

17–22 (SNNAGK) is a substrate binding site. Residues glutamate 49 and aspartate 78 each contribute to the Mg(2+) site. Aspartate 78 functions as the Proton acceptor in the catalytic mechanism. Substrate-binding positions include serine 79, 164-167 (FGYD), lysine 187, and 192-193 (HR).

The protein belongs to the HAM1 NTPase family. Homodimer. Mg(2+) is required as a cofactor.

The enzyme catalyses XTP + H2O = XMP + diphosphate + H(+). It carries out the reaction dITP + H2O = dIMP + diphosphate + H(+). The catalysed reaction is ITP + H2O = IMP + diphosphate + H(+). Pyrophosphatase that catalyzes the hydrolysis of nucleoside triphosphates to their monophosphate derivatives, with a high preference for the non-canonical purine nucleotides XTP (xanthosine triphosphate), dITP (deoxyinosine triphosphate) and ITP. Seems to function as a house-cleaning enzyme that removes non-canonical purine nucleotides from the nucleotide pool, thus preventing their incorporation into DNA/RNA and avoiding chromosomal lesions. The sequence is that of dITP/XTP pyrophosphatase from Bordetella bronchiseptica (strain ATCC BAA-588 / NCTC 13252 / RB50) (Alcaligenes bronchisepticus).